The primary structure comprises 99 residues: Large ribosomal subunit protein uL23 (99 aa).

It belongs to the universal ribosomal protein uL23 family. As to quaternary structure, part of the 50S ribosomal subunit. Contacts protein L29, and trigger factor when it is bound to the ribosome.

Functionally, one of the early assembly proteins it binds 23S rRNA. One of the proteins that surrounds the polypeptide exit tunnel on the outside of the ribosome. Forms the main docking site for trigger factor binding to the ribosome. In Blochmanniella floridana, this protein is Large ribosomal subunit protein uL23.